The chain runs to 335 residues: MKFVDSAKISVKAGDGGRGCVSFRREKFVPKGGPDGGDGGRGGHVYLRANRQLSTLLDFKYRKSYIAGRGEHGMGARKSGKNGNDVVIGVPCGTVVRNAETGEVLCDMVEDGQEIMIAKGGRGGQGNQHFATATRQAPRFAQPGEKGDEIELEMELKLMADVGLVGFPNAGKSTLISVFSAARPKIADYPFTTLVPNLGIVRYDDYKSFVMADIPGIIEGAAEGRGLGIQFLRHIQRTKTLLVMVPSDSADIAAEYATLLRELEKFDASLLSKPRLAVITKMDIAPEDFAIPELEPGIKVIAISSVAGQGLKALKDELWRQISTSTQITVDDAGN.

An Obg domain is found at 1-159 (MKFVDSAKIS…IELEMELKLM (159 aa)). Residues 160–323 (ADVGLVGFPN…LKDELWRQIS (164 aa)) enclose the OBG-type G domain. GTP-binding positions include 166-173 (GFPNAGKS), 191-195 (FTTLV), 213-216 (DIPG), 280-283 (TKMD), and 304-306 (SSV). Ser173 and Thr193 together coordinate Mg(2+).

This sequence belongs to the TRAFAC class OBG-HflX-like GTPase superfamily. OBG GTPase family. In terms of assembly, monomer. Mg(2+) is required as a cofactor.

The protein localises to the cytoplasm. Its function is as follows. An essential GTPase which binds GTP, GDP and possibly (p)ppGpp with moderate affinity, with high nucleotide exchange rates and a fairly low GTP hydrolysis rate. Plays a role in control of the cell cycle, stress response, ribosome biogenesis and in those bacteria that undergo differentiation, in morphogenesis control. This is GTPase Obg from Chlorobaculum parvum (strain DSM 263 / NCIMB 8327) (Chlorobium vibrioforme subsp. thiosulfatophilum).